We begin with the raw amino-acid sequence, 304 residues long: Porphobilinogen deaminase (304 aa).

C240 carries the post-translational modification S-(dipyrrolylmethanemethyl)cysteine.

The protein belongs to the HMBS family. As to quaternary structure, monomer. The cofactor is dipyrromethane.

It carries out the reaction 4 porphobilinogen + H2O = hydroxymethylbilane + 4 NH4(+). Its pathway is porphyrin-containing compound metabolism; protoporphyrin-IX biosynthesis; coproporphyrinogen-III from 5-aminolevulinate: step 2/4. In terms of biological role, tetrapolymerization of the monopyrrole PBG into the hydroxymethylbilane pre-uroporphyrinogen in several discrete steps. The protein is Porphobilinogen deaminase of Xanthomonas euvesicatoria pv. vesicatoria (strain 85-10) (Xanthomonas campestris pv. vesicatoria).